Reading from the N-terminus, the 305-residue chain is MPGQAGRRRLVGGGCRGSQGPLGGAATMLRSLLLHSLRLCAQTASCLVLFPRFLGTACMLWLLDFLCIRKHLLGRRRRGEPETEVELNSDGDEVPPDDPPICVSDDNRLCTLASLRAVWHGQKLDFFKQAHEGGPAPNSEVVLPDGFQNQHILDYARGNRPLVLNFGSCTUPPFMARMSAFQRLVTKYQRDVDFLIIYIEEAHPSDGWVTTDSPYSIPQHRSLEDRVSAARVLQQGAPECSLVLDTMANSSSSAYGAYFERLYVIQSGTIMYQGGRGPDGYQVSELRTWLERYDQQLHGPQPRRV.

Over 1–43 (MPGQAGRRRLVGGGCRGSQGPLGGAATMLRSLLLHSLRLCAQT) the chain is Cytoplasmic. The chain crosses the membrane as a helical; Signal-anchor for type II membrane protein span at residues 44-63 (ASCLVLFPRFLGTACMLWLL). Residues 64–305 (DFLCIRKHLL…QLHGPQPRRV (242 aa)) are Extracellular-facing. Positions 79-98 (GEPETEVELNSDGDEVPPDD) are disordered. Positions 82 to 96 (ETEVELNSDGDEVPP) are enriched in acidic residues. Sec-171 is a catalytic residue. Residue Sec-171 is a non-standard amino acid, selenocysteine.

It belongs to the iodothyronine deiodinase family. Monomer. Homodimer. May undergo minor heretodimerization with DIO1 and DIO2. In terms of tissue distribution, expressed in brain only.

It localises to the cell membrane. Its subcellular location is the endosome membrane. The enzyme catalyses 3,3',5'-triiodo-L-thyronine + iodide + A + H(+) = L-thyroxine + AH2. The catalysed reaction is 3,3'-diiodo-L-thyronine + iodide + A + H(+) = 3,3',5-triiodo-L-thyronine + AH2. It catalyses the reaction 3-iodo-L-thyronine + iodide + A + H(+) = 3,5-diiodo-L-thyronine + AH2. It carries out the reaction L-thyronine + iodide + A + H(+) = 3-iodo-L-thyronine + AH2. The enzyme catalyses 3',5'-diiodo-L-thyronine + iodide + A + H(+) = 3,3',5'-triiodo-L-thyronine + AH2. The catalysed reaction is 3'-iodo-L-thyronine + iodide + A + H(+) = 3,3'-diiodo-L-thyronine + AH2. It catalyses the reaction 3,3',5'-triiodothyronamine + iodide + A + H(+) = 3,3',5,5'-tetraiodothyronamine + AH2. It carries out the reaction 3',5'-diiodothyronamine + iodide + A + H(+) = 3,3',5'-triiodothyronamine + AH2. The enzyme catalyses 3,3'-diiodothyronamine + iodide + A + H(+) = 3,3',5-triiodothyronamine + AH2. The catalysed reaction is 3-iodothyronamine + iodide + A + H(+) = 3,5-diiodothyronamine + AH2. It catalyses the reaction 3'-iodothyronamine + iodide + A + H(+) = 3,3'-diiodothyronamine + AH2. It carries out the reaction thyronamine + iodide + A + H(+) = 3-iodothyronamine + AH2. Functionally, plays a crucial role in the metabolism of thyroid hormones (TH) and has specific roles in TH activation and inactivation by deiodination, particularly in different tissues. Catalyzes the deiodination of L-thyroxine (T4) to 3,3',5'-triiodothyronine (rT3), 3,5-diiodothyronine (3,5-T2) to 3-monoiodothyronine (3-T1), rT3 to 3',5'-diiodothyronine (3',5'-T2) and 3,3'-diiodothyronine (3,3'-T2) to 3'-monoiodothyronine (3'-T1) via inner-ring deiodination (IRD). Catalyzes the deiodination of 3,5,3'-triiodothyronine (T3) to 3,3'-diiodothyronine (3,3'-T2) via IRD. Catalyzes the deiodination of 3-T1 to L-thyronine (T0) via outer-ring deiodination (ORD). Catalyzes the tyrosyl ring deiodinations of 3,3',5,5'-tetraiodothyronamine, 3,3',5'-triiodothyronamine, 3,5,3'-triiodothyronamine, 3,5-diiodothyronamine, 3,3'-diiodothyronamine and 3-iodothyronamine. This is Thyroxine 5-deiodinase (DIO3) from Sus scrofa (Pig).